The primary structure comprises 639 residues: MSGAFNNDGRGISPLIATSWERCNKLMKRETWNVPHQAQGVTFASIYRRKKAMLTLGQAALEDAWEYMAPRECALFILDETACILSRNGDPQTLQQLSALGFNDGTYCAEGIIGTCALSLAAISGQAVKTMADQHFKQVLWNWAFCATPLFDSKGRLTGTIALACPVEQTTAADLPLTLAIAREVGNLLLTDSLLAETNRHLNQLNALLESMDDGVISWDEQGNLQFINAQAARVLRLDATASQGRAITELLTLPAVLQQAIKQAHPLKHVEATFESQHQFIDAVITLKPIIETQGTSFILLLHPVEQMRQLMTSQLGKVSHTFAHMPQDDPQTRRLIHFGRQAARSSFPVLLCGEEGVGKALLSQAIHNESERAAGPYIAVNCELYGDAALAEEFIGGDRTDNENGRLSRLELAHGGTLFLEKIEYLAVELQSALLQVIKQGVITRLDARRLIPIDVKVIATTTADLAMLVEQNRFSRQLYYALHAFEITIPPLRMRRGSIPALVNNKLRSLEKRFSTRLKIDDDALARLVSCAWPGNDFELYSVIENLALSSDNGRIRVSDLPEHLFTEQATDDVSATRLSTSLSFAEVEKEAIINAAQVTGGRIQEMSALLGIGRTTLWRKMKQHGIDAGQFKRRV.

The interval 1–318 is sensor domain; that stretch reads MSGAFNNDGR…MRQLMTSQLG (318 aa). The GAF domain occupies 52–189; the sequence is AMLTLGQAAL…AIAREVGNLL (138 aa). Residues 203–265 form the PAS domain; it reads NQLNALLESM…AVLQQAIKQA (63 aa). In terms of domain architecture, Sigma-54 factor interaction spans 327–552; sequence MPQDDPQTRR…LYSVIENLAL (226 aa). ATP is bound by residues 355-362 and 415-424; these read GEEGVGKA and AHGGTLFLEK.

In terms of assembly, homodimer. DhaR forms complexes with DhaK and DhaL-ADP.

Functionally, positively regulates the dhaKLM operon from a sigma-70 promoter. Represses its own expression. This is PTS-dependent dihydroxyacetone kinase operon regulatory protein from Escherichia coli (strain K12).